Here is a 124-residue protein sequence, read N- to C-terminus: Small ribosomal subunit protein uS12 (124 aa).

Asp-89 is subject to 3-methylthioaspartic acid.

This sequence belongs to the universal ribosomal protein uS12 family. In terms of assembly, part of the 30S ribosomal subunit. Contacts proteins S8 and S17. May interact with IF1 in the 30S initiation complex.

In terms of biological role, with S4 and S5 plays an important role in translational accuracy. Interacts with and stabilizes bases of the 16S rRNA that are involved in tRNA selection in the A site and with the mRNA backbone. Located at the interface of the 30S and 50S subunits, it traverses the body of the 30S subunit contacting proteins on the other side and probably holding the rRNA structure together. The combined cluster of proteins S8, S12 and S17 appears to hold together the shoulder and platform of the 30S subunit. The protein is Small ribosomal subunit protein uS12 of Leptospira biflexa serovar Patoc (strain Patoc 1 / Ames).